Here is a 474-residue protein sequence, read N- to C-terminus: 3-isopropylmalate dehydratase large subunit (474 aa).

Positions 355, 415, and 418 each coordinate [4Fe-4S] cluster.

This sequence belongs to the aconitase/IPM isomerase family. LeuC type 1 subfamily. Heterodimer of LeuC and LeuD. Requires [4Fe-4S] cluster as cofactor.

The enzyme catalyses (2R,3S)-3-isopropylmalate = (2S)-2-isopropylmalate. Its pathway is amino-acid biosynthesis; L-leucine biosynthesis; L-leucine from 3-methyl-2-oxobutanoate: step 2/4. Its function is as follows. Catalyzes the isomerization between 2-isopropylmalate and 3-isopropylmalate, via the formation of 2-isopropylmaleate. This is 3-isopropylmalate dehydratase large subunit from Shewanella sp. (strain W3-18-1).